Here is a 144-residue protein sequence, read N- to C-terminus: uncharacterized protein (144 aa).

In terms of domain architecture, N-acetyltransferase spans Ile2–Leu144.

This sequence belongs to the acetyltransferase family.

It localises to the cytoplasm. Its subcellular location is the nucleus. This is an uncharacterized protein from Schizosaccharomyces pombe (strain 972 / ATCC 24843) (Fission yeast).